Reading from the N-terminus, the 346-residue chain is Phosphoribosylformylglycinamidine cyclo-ligase (346 aa).

Belongs to the AIR synthase family.

It localises to the cytoplasm. The enzyme catalyses 2-formamido-N(1)-(5-O-phospho-beta-D-ribosyl)acetamidine + ATP = 5-amino-1-(5-phospho-beta-D-ribosyl)imidazole + ADP + phosphate + H(+). The protein operates within purine metabolism; IMP biosynthesis via de novo pathway; 5-amino-1-(5-phospho-D-ribosyl)imidazole from N(2)-formyl-N(1)-(5-phospho-D-ribosyl)glycinamide: step 2/2. In Photorhabdus laumondii subsp. laumondii (strain DSM 15139 / CIP 105565 / TT01) (Photorhabdus luminescens subsp. laumondii), this protein is Phosphoribosylformylglycinamidine cyclo-ligase.